The chain runs to 59 residues: Photosystem II reaction center protein K (59 aa).

A propeptide spanning residues 1–22 (MLNIFSLICLNSDLYSSRFFLA) is cleaved from the precursor. A helical transmembrane segment spans residues 38 to 58 (MPVIPLFFLLLAFVWQAAVSF).

It belongs to the PsbK family. PSII is composed of 1 copy each of membrane proteins PsbA, PsbB, PsbC, PsbD, PsbE, PsbF, PsbH, PsbI, PsbJ, PsbK, PsbL, PsbM, PsbT, PsbX, PsbY, PsbZ, Psb30/Ycf12, at least 3 peripheral proteins of the oxygen-evolving complex and a large number of cofactors. It forms dimeric complexes.

It is found in the plastid. Its subcellular location is the chloroplast thylakoid membrane. One of the components of the core complex of photosystem II (PSII). PSII is a light-driven water:plastoquinone oxidoreductase that uses light energy to abstract electrons from H(2)O, generating O(2) and a proton gradient subsequently used for ATP formation. It consists of a core antenna complex that captures photons, and an electron transfer chain that converts photonic excitation into a charge separation. In Oenothera elata subsp. hookeri (Hooker's evening primrose), this protein is Photosystem II reaction center protein K.